Reading from the N-terminus, the 579-residue chain is Salivary alpha-glucosidase (579 aa).

A signal peptide spans 1-18 (MKIFVPLLSFLLAGLTTG). Ca(2+)-binding residues include Asp-37, Asp-39, Asp-41, Ile-43, Asp-45, and Asn-118. N-linked (GlcNAc...) asparagine glycans are attached at residues Asn-118 and Asn-151. Position 189 (Asp-189) interacts with Ca(2+). Catalysis depends on Asp-219, which acts as the Nucleophile. 3 residues coordinate Ca(2+): Tyr-223, Leu-224, and Glu-226. The N-linked (GlcNAc...) asparagine glycan is linked to Asn-282. The Proton donor role is filled by Glu-290. 3 N-linked (GlcNAc...) asparagine glycosylation sites follow: Asn-304, Asn-325, and Asn-401. Asn-325 is a binding site for N-acetyl-beta-D-glucosamine.

The protein belongs to the glycosyl hydrolase 13 family. In terms of tissue distribution, saliva (at protein level). Proximal lateral lobes of the salivary gland (at protein level).

The protein localises to the secreted. It catalyses the reaction Hydrolysis of terminal, non-reducing (1-&gt;4)-linked alpha-D-glucose residues with release of alpha-D-glucose.. Its function is as follows. Functions as a glucosidase that shows high activity toward sucrose, a major component of nectar. Assists the mosquito in its sugar-feeding capabilities. The protein is Salivary alpha-glucosidase of Aedes aegypti (Yellowfever mosquito).